The primary structure comprises 382 residues: Chaperone protein DnaJ (382 aa).

In terms of domain architecture, J spans 5–70 (DYYEVLGVSR…DKKAAYDRYG (66 aa)). A CR-type zinc finger spans residues 141–219 (GVQKTINVPA…CHGAGRVEKE (79 aa)). Residues C154, C157, C171, C174, C193, C196, C207, and C210 each coordinate Zn(2+). CXXCXGXG motif repeat units follow at residues 154–161 (CDACKGTG), 171–178 (CPTCSGMG), 193–200 (CPTCNGMG), and 207–214 (CKVCHGAG).

The protein belongs to the DnaJ family. As to quaternary structure, homodimer. Requires Zn(2+) as cofactor.

It is found in the cytoplasm. Participates actively in the response to hyperosmotic and heat shock by preventing the aggregation of stress-denatured proteins and by disaggregating proteins, also in an autonomous, DnaK-independent fashion. Unfolded proteins bind initially to DnaJ; upon interaction with the DnaJ-bound protein, DnaK hydrolyzes its bound ATP, resulting in the formation of a stable complex. GrpE releases ADP from DnaK; ATP binding to DnaK triggers the release of the substrate protein, thus completing the reaction cycle. Several rounds of ATP-dependent interactions between DnaJ, DnaK and GrpE are required for fully efficient folding. Also involved, together with DnaK and GrpE, in the DNA replication of plasmids through activation of initiation proteins. The polypeptide is Chaperone protein DnaJ (Cereibacter sphaeroides (strain ATCC 17023 / DSM 158 / JCM 6121 / CCUG 31486 / LMG 2827 / NBRC 12203 / NCIMB 8253 / ATH 2.4.1.) (Rhodobacter sphaeroides)).